Consider the following 224-residue polypeptide: Urease accessory protein UreF (224 aa).

The protein belongs to the UreF family. As to quaternary structure, ureD, UreF and UreG form a complex that acts as a GTP-hydrolysis-dependent molecular chaperone, activating the urease apoprotein by helping to assemble the nickel containing metallocenter of UreC. The UreE protein probably delivers the nickel.

The protein resides in the cytoplasm. In terms of biological role, required for maturation of urease via the functional incorporation of the urease nickel metallocenter. The chain is Urease accessory protein UreF from Pseudomonas putida (strain GB-1).